We begin with the raw amino-acid sequence, 568 residues long: Zinc finger protein 583 (568 aa).

The KRAB domain maps to 6–77; it reads LTFEDVSVNF…QKKGARDTCP (72 aa). 12 consecutive C2H2-type zinc fingers follow at residues 211 to 233, 239 to 261, 267 to 289, 295 to 317, 323 to 345, 351 to 373, 379 to 401, 407 to 429, 435 to 457, 463 to 485, 491 to 513, and 519 to 541; these read LKCS…QRIH, YACV…KRIH, YECK…QRVH, YQCK…QRIH, FECI…QRIH, YVCH…QRIH, YECA…QRSH, YICK…QRIH, YECN…QRIH, and YECK…EKVH.

Belongs to the krueppel C2H2-type zinc-finger protein family.

Its subcellular location is the nucleus. Functionally, may be involved in transcriptional regulation. The protein is Zinc finger protein 583 (Znf583) of Mus musculus (Mouse).